The primary structure comprises 234 residues: Bradykinin-releasing enzyme KR-E-1 (234 aa).

The Peptidase S1 domain maps to 1–225; sequence VIGGDECNIN…YSDWIQSIIA (225 aa). Cystine bridges form between C7/C139, C26/C42, C74/C232, C118/C186, C150/C165, and C176/C201. N20 carries an N-linked (GlcNAc...) asparagine glycan. Catalysis depends on charge relay system residues H41 and D86. S180 serves as the catalytic Charge relay system.

It belongs to the peptidase S1 family. Snake venom subfamily. Monomer. Expressed by the venom gland.

It is found in the secreted. Functionally, bradykinin-releasing enzyme. Releases bradykinin from bovine HMW kininogen. Has anticoagulant activity. Increases permeability of capillaries by intradermal injection into rabbits. In Gloydius ussuriensis (Ussuri mamushi), this protein is Bradykinin-releasing enzyme KR-E-1.